The chain runs to 368 residues: tRNA-specific 2-thiouridylase MnmA (368 aa).

Residues 11–18 (GMSGGVDS) and Met-37 each bind ATP. The interval 97–99 (NPD) is interaction with target base in tRNA. The Nucleophile role is filled by Cys-102. A disulfide bridge links Cys-102 with Cys-199. Residue Gly-127 participates in ATP binding. Residues 149–151 (KDQ) form an interaction with tRNA region. The active-site Cysteine persulfide intermediate is Cys-199. The interaction with tRNA stretch occupies residues 311 to 312 (RY).

This sequence belongs to the MnmA/TRMU family.

It localises to the cytoplasm. The enzyme catalyses S-sulfanyl-L-cysteinyl-[protein] + uridine(34) in tRNA + AH2 + ATP = 2-thiouridine(34) in tRNA + L-cysteinyl-[protein] + A + AMP + diphosphate + H(+). In terms of biological role, catalyzes the 2-thiolation of uridine at the wobble position (U34) of tRNA, leading to the formation of s(2)U34. This chain is tRNA-specific 2-thiouridylase MnmA, found in Baumannia cicadellinicola subsp. Homalodisca coagulata.